We begin with the raw amino-acid sequence, 577 residues long: 2-succinyl-5-enolpyruvyl-6-hydroxy-3-cyclohexene-1-carboxylate synthase (577 aa).

It belongs to the TPP enzyme family. MenD subfamily. In terms of assembly, homodimer. Mg(2+) serves as cofactor. Requires Mn(2+) as cofactor. The cofactor is thiamine diphosphate.

It carries out the reaction isochorismate + 2-oxoglutarate + H(+) = 5-enolpyruvoyl-6-hydroxy-2-succinyl-cyclohex-3-ene-1-carboxylate + CO2. The protein operates within quinol/quinone metabolism; 1,4-dihydroxy-2-naphthoate biosynthesis; 1,4-dihydroxy-2-naphthoate from chorismate: step 2/7. It participates in quinol/quinone metabolism; menaquinone biosynthesis. Its function is as follows. Catalyzes the thiamine diphosphate-dependent decarboxylation of 2-oxoglutarate and the subsequent addition of the resulting succinic semialdehyde-thiamine pyrophosphate anion to isochorismate to yield 2-succinyl-5-enolpyruvyl-6-hydroxy-3-cyclohexene-1-carboxylate (SEPHCHC). The protein is 2-succinyl-5-enolpyruvyl-6-hydroxy-3-cyclohexene-1-carboxylate synthase of Porphyromonas gingivalis (strain ATCC BAA-308 / W83).